The following is a 450-amino-acid chain: Glucose-6-phosphate isomerase (450 aa).

Phosphothreonine is present on Thr-39. The active-site Proton donor is Glu-291. Residues His-312 and Lys-426 contribute to the active site.

The protein belongs to the GPI family.

Its subcellular location is the cytoplasm. The catalysed reaction is alpha-D-glucose 6-phosphate = beta-D-fructose 6-phosphate. It participates in carbohydrate biosynthesis; gluconeogenesis. The protein operates within carbohydrate degradation; glycolysis; D-glyceraldehyde 3-phosphate and glycerone phosphate from D-glucose: step 2/4. Catalyzes the reversible isomerization of glucose-6-phosphate to fructose-6-phosphate. This Halalkalibacterium halodurans (strain ATCC BAA-125 / DSM 18197 / FERM 7344 / JCM 9153 / C-125) (Bacillus halodurans) protein is Glucose-6-phosphate isomerase.